The primary structure comprises 476 residues: Doublecortin domain-containing protein 2 (476 aa).

Doublecortin domains are found at residues 17-100 and 139-221; these read KSVL…LNYL and CTIF…LPYS. The segment at 234-476 is disordered; that stretch reads FGQKASSLPP…QQNKDYAAVA (243 aa). The segment covering 261 to 272 has biased composition (polar residues); that stretch reads STVGSSDNSSPQ. Serine 270 is modified (phosphoserine). Positions 279–289 are enriched in basic and acidic residues; it reads KKEDVNSEKLT. Positions 296–306 are enriched in polar residues; the sequence is KLKNSQETIPN. Residues 354-366 show a composition bias toward basic and acidic residues; the sequence is EKANKDAEQKEDF. Low complexity predominate over residues 415–426; that stretch reads ELQQVNNELQLV. Positions 446 to 455 are enriched in basic and acidic residues; sequence DPQRPPRPEV.

Interacts with DVL1, DVL2 and DVL3. Ubiquitously expressed. In brain, highly expressed in the entorhinal cortex, inferior temporal cortex, medial temporal cortex, hypothalamus, amygdala and hippocampus. Expressed in liver by cholangiocytes, the epithelial cells of the bile ducts (at protein level).

Its subcellular location is the cell projection. The protein localises to the cilium. It localises to the cytoplasm. It is found in the cytoskeleton. The protein resides in the cilium axoneme. Its subcellular location is the kinocilium. In terms of biological role, protein that plays a role in the inhibition of canonical Wnt signaling pathway. May be involved in neuronal migration during development of the cerebral neocortex. Involved in the control of ciliogenesis and ciliary length. The protein is Doublecortin domain-containing protein 2 (DCDC2) of Homo sapiens (Human).